The sequence spans 402 residues: S-adenosylmethionine synthase (402 aa).

An ATP-binding site is contributed by 137–142; it reads GQGSAD.

The protein belongs to the AdoMet synthase 2 family. Mg(2+) is required as a cofactor.

The enzyme catalyses L-methionine + ATP + H2O = S-adenosyl-L-methionine + phosphate + diphosphate. Its pathway is amino-acid biosynthesis; S-adenosyl-L-methionine biosynthesis; S-adenosyl-L-methionine from L-methionine: step 1/1. Catalyzes the formation of S-adenosylmethionine from methionine and ATP. This chain is S-adenosylmethionine synthase, found in Pyrobaculum islandicum (strain DSM 4184 / JCM 9189 / GEO3).